We begin with the raw amino-acid sequence, 431 residues long: Teosinte glume architecture 1 (431 aa).

2 disordered regions span residues 18-55 (QDHA…GAPA) and 68-102 (ECEP…QQCP). Residues 21 to 41 (AAAAPSSGGHAANAAAAGTGT) are compositionally biased toward low complexity. An SBP-type zinc finger spans residues 101-178 (CPSCAVDGCR…DGHNRRRRKP (78 aa)). Residues Cys104, Cys109, Cys126, His129, Cys145, Cys148, His152, and Cys164 each coordinate Zn(2+). A compositionally biased stretch (gly residues) spans 408 to 419 (GGGSGGGEGSSD). A disordered region spans residues 408 to 431 (GGGSGGGEGSSDGGTSSSMPFSWQ).

As to quaternary structure, monomer and homodimer. Strongly expressed in immature ears and weakly in husks. Found in the inflorescence meristem of the developing ear, in the spikelet pair primordia, the glume primordia, the cupule forming region and other floral organs. Not detected in other tissues.

In terms of biological role, SBP transcriptional regulator probably involved in the domestication of maize. Acts as a transcriptional repressor binding to a 5'-GTAC-3' motif. May repress the growth of lateral branches in length and numbers. The sequence is that of Teosinte glume architecture 1 from Zea mays (Maize).